Reading from the N-terminus, the 158-residue chain is Low molecular weight phosphotyrosine protein phosphatase (158 aa).

Ala2 carries the N-acetylalanine modification. Cys13 functions as the Nucleophile in the catalytic mechanism. Arg19 is an active-site residue. Asp130 serves as the catalytic Proton donor. A phosphotyrosine mark is found at Tyr132 and Tyr133.

It belongs to the low molecular weight phosphotyrosine protein phosphatase family. Interacts with EPHA2; dephosphorylates EPHA2. Interacts with EPHB1. Interacts with the SH3 domain of SPTAN1. In terms of processing, phosphorylated by LCK. Phosphorylation at Tyr-132 increases its phosphatase activity.

The protein localises to the cytoplasm. It catalyses the reaction O-phospho-L-tyrosyl-[protein] + H2O = L-tyrosyl-[protein] + phosphate. The enzyme catalyses a phosphate monoester + H2O = an alcohol + phosphate. Inhibited by sulfhydryl reagents. Functionally, acts on tyrosine phosphorylated proteins, low-MW aryl phosphates and natural and synthetic acyl phosphates with differences in substrate specificity between isoform 1 and isoform 2. The sequence is that of Low molecular weight phosphotyrosine protein phosphatase (ACP1) from Sus scrofa (Pig).